Here is a 357-residue protein sequence, read N- to C-terminus: Carbamoyl phosphate synthase small chain (357 aa).

Positions 1–168 (MSKRLLILED…STATAYPSPN (168 aa)) are CPSase. L-glutamine is bound by residues S46, G220, and G222. The Glutamine amidotransferase type-1 domain maps to 172-357 (KVVVVDFGLK…FMDLMDNFKK (186 aa)). C247 functions as the Nucleophile in the catalytic mechanism. L248, Q251, N289, G291, and Y292 together coordinate L-glutamine. Active-site residues include H331 and D333.

This sequence belongs to the CarA family. Composed of two chains; the small (or glutamine) chain promotes the hydrolysis of glutamine to ammonia, which is used by the large (or ammonia) chain to synthesize carbamoyl phosphate. Tetramer of heterodimers (alpha,beta)4.

It catalyses the reaction hydrogencarbonate + L-glutamine + 2 ATP + H2O = carbamoyl phosphate + L-glutamate + 2 ADP + phosphate + 2 H(+). It carries out the reaction L-glutamine + H2O = L-glutamate + NH4(+). The protein operates within amino-acid biosynthesis; L-arginine biosynthesis; carbamoyl phosphate from bicarbonate: step 1/1. It functions in the pathway pyrimidine metabolism; UMP biosynthesis via de novo pathway; (S)-dihydroorotate from bicarbonate: step 1/3. Functionally, small subunit of the glutamine-dependent carbamoyl phosphate synthetase (CPSase). CPSase catalyzes the formation of carbamoyl phosphate from the ammonia moiety of glutamine, carbonate, and phosphate donated by ATP, constituting the first step of 2 biosynthetic pathways, one leading to arginine and/or urea and the other to pyrimidine nucleotides. The small subunit (glutamine amidotransferase) binds and cleaves glutamine to supply the large subunit with the substrate ammonia. The chain is Carbamoyl phosphate synthase small chain from Lactococcus lactis subsp. cremoris (strain MG1363).